A 405-amino-acid polypeptide reads, in one-letter code: Accessory Sec system protein translocase subunit SecY2 (405 aa).

Transmembrane regions (helical) follow at residues 14 to 34 (LFTS…LPFV), 65 to 85 (IFSV…MFSF), 104 to 124 (MYLT…RLPV), 131 to 151 (ILVV…LVWL), 156 to 176 (ASMG…LNIP), 191 to 211 (GIIV…ALMY), 247 to 267 (MYVM…GFIF), 285 to 305 (PLWV…FAFV), 343 to 363 (FSVI…LFVL), and 368 to 388 (LLRL…IFTI).

It belongs to the SecY/SEC61-alpha family. SecY2 subfamily. Component of the accessory SecA2/SecY2 protein translocase complex required to export cell wall proteins. May form heterotrimers with SecE and SecG subunits.

It localises to the cell membrane. Part of the accessory SecA2/SecY2 system specifically required for export of possible cell wall proteins. The central subunit of a protein translocation channel. The protein is Accessory Sec system protein translocase subunit SecY2 of Streptococcus pneumoniae serotype 4 (strain ATCC BAA-334 / TIGR4).